We begin with the raw amino-acid sequence, 117 residues long: Galanin-like peptide (117 aa).

Residues 1 to 23 form the signal peptide; that stretch reads MACSVHLVLFLTILLSLAETPES. A propeptide spanning residues 86–117 is cleaved from the precursor; it reads TMGETFVKANTGDMHILDKNVPKEEATLDSES.

This sequence belongs to the galanin family. Isoform 2 is found in brain, thymus and skin. Isoform 2 is found in the skin, in pericytes covering microvascular arterioles and venules on their abluminal surfaces. In larger vessels, isoform 2 is expressed in layers of smooth muscle cells. Isoform 2 is not detected in endothelial cells.

The protein resides in the secreted. In terms of biological role, hypothalamic neuropeptide which binds to the G-protein-coupled galanin receptors (GALR1, GALR2 and GALR3). Involved in a large number of putative physiological functions in CNS homeostatic processes, including the regulation of gonadotropin-releasing hormone secretion. Exhibits antimicrobial activity against Gram-negative bacterias, inducing bacterial membrane blebbing. Exhibits potent and dose-dependent vasoconstrictor and anti-edema activity in the cutaneous microvasculature, a physiologic effects which does not appear to be mediated via GALR1 or GALR2. This chain is Galanin-like peptide (Galp), found in Mus musculus (Mouse).